A 338-amino-acid chain; its full sequence is Large ribosomal subunit protein uL10 (338 aa).

The segment at 297–338 is disordered; it reads PSAQQTQTQQSTAEEKKEEKKEEEKKGPSEEEIGSGLASLFG. Residues 298–308 show a composition bias toward low complexity; it reads SAQQTQTQQST. The segment covering 309 to 325 has biased composition (basic and acidic residues); it reads AEEKKEEKKEEEKKGPS.

This sequence belongs to the universal ribosomal protein uL10 family. As to quaternary structure, part of the 50S ribosomal subunit. Forms part of the ribosomal stalk which helps the ribosome interact with GTP-bound translation factors. Forms a heptameric L10(L12)2(L12)2(L12)2 complex, where L10 forms an elongated spine to which the L12 dimers bind in a sequential fashion.

Functionally, forms part of the ribosomal stalk, playing a central role in the interaction of the ribosome with GTP-bound translation factors. The chain is Large ribosomal subunit protein uL10 from Saccharolobus islandicus (strain Y.N.15.51 / Yellowstone #2) (Sulfolobus islandicus).